The primary structure comprises 1483 residues: Heme-responsive zinc finger transcription factor HAP1 (1483 aa).

The span at 1-50 shows a compositional bias: polar residues; the sequence is MSNTPYNSSVPSIASMTQSSVSRSPNMHTATTPGANTSSNSPPLHMSSDS. The disordered stretch occupies residues 1–56; the sequence is MSNTPYNSSVPSIASMTQSSVSRSPNMHTATTPGANTSSNSPPLHMSSDSSKIKRK. Residues Cys-64, Cys-67, Cys-74, Cys-81, Cys-84, and Cys-93 each coordinate Zn(2+). The segment at residues 64-93 is a DNA-binding region (zn(2)-C6 fungal-type); the sequence is CTICRKRKVKCDKLRPHCQQCTKTGVAHLC. Positions 105–134 form a coiled coil; the sequence is EKELLKDNELKKLRERVKSLEKTLSKVHSS. Positions 162 to 176 are enriched in polar residues; it reads VNANTGSASSASHMH. Residues 162–208 form a disordered region; that stretch reads VNANTGSASSASHMHQQQQQQQQQEQQQDFSRSANANANSSSLSISN. A compositionally biased stretch (low complexity) spans 177 to 208; the sequence is QQQQQQQQQEQQQDFSRSANANANSSSLSISN. Residues 244–444 are heme-responsive; required for HMC formation; the sequence is KGDPYLKLLW…NTIPHHQPQS (201 aa). HRM repeat units follow at residues 280–285, 299–304, 323–328, 347–352, 389–394, and 415–420; these read KCPINH, KCPVDH, RCPVDH, and RCPIDH. 2 stretches are compositionally biased toward polar residues: residues 432-447 and 706-734; these read STHN…SGSH and QLNA…NPTL. Disordered stretches follow at residues 432-458 and 706-767; these read STHN…NRKH and QLNA…KENQ. The span at 735–759 shows a compositional bias: low complexity; that stretch reads NNNMSAATTNSSSRSGSADSRSGSN. An HRM 7 repeat occupies 1192 to 1197; it reads KCPVYQ. Disordered stretches follow at residues 1266 to 1289 and 1386 to 1411; these read DGYI…SNGL and NTDT…ASNS. Residues 1388–1411 are compositionally biased toward polar residues; that stretch reads DTSANGSALSTLTSPQGSDLASNS.

Binds DNA as a homodimer. Interacts with SRO9 and YDJ1. In the absence of heme, binds to at least four cellular proteins, including YDJ1 and SRO9, forming a high-molecular-weight complex (HMC) which results in repression of its activity and dictates its DNA-binding specificity.

Its subcellular location is the nucleus. Its function is as follows. Regulation of oxygen dependent gene expression. It modulates the expression of Iso-1 (CYP1) and Iso-2 (CYP3) cytochrome c. In response to heme, promotes transcription of genes encoding functions required for respiration, controlling oxidative damage and repression of anaerobic genes. Binds to the sequence 5'-CGGNNNTNNCGG-3'. The chain is Heme-responsive zinc finger transcription factor HAP1 (HAP1) from Saccharomyces cerevisiae (strain JAY291) (Baker's yeast).